The sequence spans 312 residues: Heme oxygenase 2 (312 aa).

N-acetylserine is present on Ser-2. Phosphoserine is present on Ser-2. His-41 contributes to the heme b binding site. HRM repeat units lie at residues 260–265 and 277–282; these read KCPYYA and SCPFRA. 2 positions are modified to S-nitrosocysteine: Cys-261 and Cys-278.

It belongs to the heme oxygenase family. In terms of processing, S-nitrosylated by BLVRB.

The protein resides in the microsome. It is found in the endoplasmic reticulum. The catalysed reaction is heme b + 3 reduced [NADPH--hemoprotein reductase] + 3 O2 = biliverdin IXalpha + CO + Fe(2+) + 3 oxidized [NADPH--hemoprotein reductase] + 3 H2O + H(+). In terms of biological role, heme oxygenase cleaves the heme ring at the alpha methene bridge to form biliverdin. Biliverdin is subsequently converted to bilirubin by biliverdin reductase. Under physiological conditions, the activity of heme oxygenase is highest in the spleen, where senescent erythrocytes are sequestrated and destroyed. Heme oxygenase 2 could be implicated in the production of carbon monoxide in brain where it could act as a neurotransmitter. In Oryctolagus cuniculus (Rabbit), this protein is Heme oxygenase 2 (HMOX2).